Consider the following 212-residue polypeptide: Pyrrolidone-carboxylate peptidase (212 aa).

Catalysis depends on residues E80, C143, and H165.

The protein belongs to the peptidase C15 family. In terms of assembly, homotetramer.

The protein localises to the cytoplasm. The enzyme catalyses Release of an N-terminal pyroglutamyl group from a polypeptide, the second amino acid generally not being Pro.. In terms of biological role, removes 5-oxoproline from various penultimate amino acid residues except L-proline. This chain is Pyrrolidone-carboxylate peptidase, found in Vibrio campbellii (strain ATCC BAA-1116).